The primary structure comprises 755 residues: MRRLLTGCLLSSARPLKSRLPLLMSSSLPSSAGKKPKQATLARFFTSMKNKPTEGTPSPKKSSKHMLEDRMDNVSGEEEYATKKLKQTAVTHTVAAPSSMGSNFSSIPSSAPSSGVADSPQQSQRLVGEVEDALSSNNNDHYSSNIPYSEVCEVFNKIEAISSRLEIIRICSDFFIKIMKQSSKNLIPTTYLFINRLGPDYEAGLELGLGENLLMKTISETCGKSMSQIKLKYKDIGDLGEIAMGARNVQPTMFKPKPLTVGEVFKNLRAIAKTQGKDSQLKKMKLIKRMLTACKGIEAKFLIRSLESKLRIGLAEKTVLISLSKALLLHDENREDSPDKDVPMDVLESAQQKIRDAFCQVPNYEIVINSCLEHGIMNLDKYCTLRPGIPLKPMLAKPTKAINEVLDRFQGETFTSEYKYDGERAQVHLLNDGTMRIYSRNGENMTERYPEINITDFIQDLDTTKNLILDCEAVAWDKDQGKILPFQVLSTRKRKDVELNDVKVKVCLFAFDILCYNDERLINKSLKERREYLTKVTKVVPGEFQYATQITTNNLDELQKFLDESVNHSCEGLMVKMLEGPESHYEPSKRSRNWLKLKKDYLEGVGDSLDLCVLGAYYGRGKRTGTYGGFLLGCYNQDTGEFETCCKIGTGFSDEMLQLLHDRLTPTIIDGPKATFVFDSSAEPDVWFEPTTLFEVLTADLSLSPIYKAGSATFDKGVSLRFPRFLRIREDKGVEDATSSDQIVELYENQSHMQN.

A mitochondrion-targeting transit peptide spans 1 to 44 (MRRLLTGCLLSSARPLKSRLPLLMSSSLPSSAGKKPKQATLARF). At Arg2 the chain carries N-acetylserine. Over residues 47 to 60 (SMKNKPTEGTPSPK) the composition is skewed to polar residues. 2 disordered regions span residues 47–79 (SMKNKPTEGTPSPKKSSKHMLEDRMDNVSGEEE) and 97–127 (PSSMGSNFSSIPSSAPSSGVADSPQQSQRLV). Residues Ser58 and Ser75 each carry the phosphoserine modification. A compositionally biased stretch (low complexity) spans 102–114 (SNFSSIPSSAPSS). Residues Ser119 and Ser123 each carry the phosphoserine modification. Residues 309–318 (KLRIGLAEKT) are interaction with target DNA. Glu417 lines the ATP pocket. The active-site N6-AMP-lysine intermediate is Lys419. Residues Arg424 and Arg440 each contribute to the ATP site. Glu472 lines the Mg(2+) pocket. Residues 493-495 (KRK) are interaction with target DNA. Residue Glu571 coordinates Mg(2+). ATP contacts are provided by Lys576, Arg590, and Lys596.

Belongs to the ATP-dependent DNA ligase family. Mg(2+) is required as a cofactor.

It is found in the mitochondrion. The protein resides in the nucleus. It catalyses the reaction ATP + (deoxyribonucleotide)n-3'-hydroxyl + 5'-phospho-(deoxyribonucleotide)m = (deoxyribonucleotide)n+m + AMP + diphosphate.. DNA ligase that seals nicks in double-stranded DNA during DNA replication, DNA recombination and DNA repair. The mitochondrial form is required for mitochondrial DNA maintenance but is non-essential while the nuclear form is essential for cell viability. The sequence is that of DNA ligase 1 (CDC9) from Saccharomyces cerevisiae (strain ATCC 204508 / S288c) (Baker's yeast).